The sequence spans 274 residues: uncharacterized protein (274 aa).

A signal peptide spans 1-21; that stretch reads MRKLTLLPLLLIITGLLTVQA. Residues 249–266 traverse the membrane as a helical segment; it reads TSAFVILTASALIFIYLF.

The protein resides in the membrane. This is an uncharacterized protein from Archaeoglobus fulgidus (strain ATCC 49558 / DSM 4304 / JCM 9628 / NBRC 100126 / VC-16).